The sequence spans 376 residues: Hydroxylysine kinase (376 aa).

D229 (proton acceptor) is an active-site residue.

This sequence belongs to the aminoglycoside phosphotransferase family.

It localises to the cytoplasm. The enzyme catalyses (5R)-5-hydroxy-L-lysine + GTP = (5R)-5-phosphooxy-L-lysine + GDP + H(+). Functionally, catalyzes the GTP-dependent phosphorylation of 5-hydroxy-L-lysine. This Bos taurus (Bovine) protein is Hydroxylysine kinase (HYKK).